The chain runs to 257 residues: Phycoerythrobilin:ferredoxin oxidoreductase (257 aa).

The protein belongs to the HY2 family.

The catalysed reaction is (3Z)-phycoerythrobilin + oxidized 2[4Fe-4S]-[ferredoxin] = 15,16-dihydrobiliverdin + reduced 2[4Fe-4S]-[ferredoxin] + 2 H(+). Functionally, catalyzes the two-electron reduction of the C2 and C3(1) diene system of 15,16-dihydrobiliverdin. The chain is Phycoerythrobilin:ferredoxin oxidoreductase from Prochlorococcus marinus (strain MIT 9303).